Reading from the N-terminus, the 159-residue chain is 2-C-methyl-D-erythritol 2,4-cyclodiphosphate synthase (159 aa).

Residues Asp-10 and His-12 each contribute to the a divalent metal cation site. 4-CDP-2-C-methyl-D-erythritol 2-phosphate is bound by residues Asp-10–His-12 and His-36–Ser-37. Residue His-44 participates in a divalent metal cation binding. Residues Asp-58–Gly-60, Phe-63–Asp-67, Ala-102–Ala-108, Thr-134–Glu-137, Phe-141, and Arg-144 each bind 4-CDP-2-C-methyl-D-erythritol 2-phosphate.

Belongs to the IspF family. As to quaternary structure, homotrimer. Requires a divalent metal cation as cofactor.

The catalysed reaction is 4-CDP-2-C-methyl-D-erythritol 2-phosphate = 2-C-methyl-D-erythritol 2,4-cyclic diphosphate + CMP. Its pathway is isoprenoid biosynthesis; isopentenyl diphosphate biosynthesis via DXP pathway; isopentenyl diphosphate from 1-deoxy-D-xylulose 5-phosphate: step 4/6. Its function is as follows. Involved in the biosynthesis of isopentenyl diphosphate (IPP) and dimethylallyl diphosphate (DMAPP), two major building blocks of isoprenoid compounds. Catalyzes the conversion of 4-diphosphocytidyl-2-C-methyl-D-erythritol 2-phosphate (CDP-ME2P) to 2-C-methyl-D-erythritol 2,4-cyclodiphosphate (ME-CPP) with a corresponding release of cytidine 5-monophosphate (CMP). The sequence is that of 2-C-methyl-D-erythritol 2,4-cyclodiphosphate synthase from Cellvibrio japonicus (strain Ueda107) (Pseudomonas fluorescens subsp. cellulosa).